The primary structure comprises 401 residues: Exodeoxyribonuclease 7 large subunit (401 aa).

It belongs to the XseA family. As to quaternary structure, heterooligomer composed of large and small subunits.

Its subcellular location is the cytoplasm. It catalyses the reaction Exonucleolytic cleavage in either 5'- to 3'- or 3'- to 5'-direction to yield nucleoside 5'-phosphates.. In terms of biological role, bidirectionally degrades single-stranded DNA into large acid-insoluble oligonucleotides, which are then degraded further into small acid-soluble oligonucleotides. The sequence is that of Exodeoxyribonuclease 7 large subunit from Clostridium botulinum (strain Hall / ATCC 3502 / NCTC 13319 / Type A).